A 302-amino-acid polypeptide reads, in one-letter code: ATP synthase gamma chain (302 aa).

This sequence belongs to the ATPase gamma chain family. F-type ATPases have 2 components, CF(1) - the catalytic core - and CF(0) - the membrane proton channel. CF(1) has five subunits: alpha(3), beta(3), gamma(1), delta(1), epsilon(1). CF(0) has three main subunits: a, b and c.

Its subcellular location is the cell membrane. Its function is as follows. Produces ATP from ADP in the presence of a proton gradient across the membrane. The gamma chain is believed to be important in regulating ATPase activity and the flow of protons through the CF(0) complex. The chain is ATP synthase gamma chain from Leuconostoc citreum (strain KM20).